We begin with the raw amino-acid sequence, 282 residues long: Homeobox protein CDX-4 (282 aa).

Disordered regions lie at residues 13–36 and 98–156; these read MYPG…GGSG and MNDM…SPYA. Residues 20–29 are compositionally biased toward low complexity; the sequence is SPGGSSTAGV. Composition is skewed to polar residues over residues 110–124 and 133–148; these read DYST…SNGG and SLVS…TSPS. The homeobox DNA-binding region spans 171-230; sequence KEKYRVVYTDHQRLELEKEFHCNRYITIRRKSELAVNLGLSERQVKIWFQNRRAKERKMI.

Belongs to the Caudal homeobox family.

The protein resides in the nucleus. The chain is Homeobox protein CDX-4 (Cdx4) from Mus musculus (Mouse).